The following is a 329-amino-acid chain: Beta-tectorin (329 aa).

The N-terminal stretch at 1–17 is a signal peptide; the sequence is MVAVTVYLMVILAQAFA. In terms of domain architecture, ZP spans 19 to 287; it reads PCTPNKADVI…VTCDKRKQRM (269 aa). Asn80, Asn104, Asn116, and Asn145 each carry an N-linked (GlcNAc...) asparagine glycan. Cys204 and Cys264 are joined by a disulfide. Residue Gly304 is the site of GPI-anchor amidated glycine attachment. Positions 305 to 329 are cleaved as a propeptide — removed in mature form; that stretch reads LSRFYMLSDVIFHLLFAIGFCAILL.

In terms of assembly, may form homomeric filament after self-association or heteromeric filament after association with alpha-tectorin. The N-terminus is blocked. Post-translationally, N-glycosylated. In terms of processing, the presence of a hydrophobic C-terminus preceded by a potential cleavage site strongly suggests that tectorins are synthesized as glycosylphosphatidylinositol-linked, membrane-bound precursors. Tectorins are targeted to the apical surface of the inner ear epithelia by the lipid and proteolytically released into the extracellular compartment. As to expression, exclusively expressed in the inner ear, where it is found in basilar papilla, clear cells, supporting cells, cuboidal cells and the lagena macula.

The protein localises to the cell membrane. It is found in the secreted. It localises to the extracellular space. The protein resides in the extracellular matrix. In terms of biological role, one of the major non-collagenous components of the tectorial membrane. The tectorial membrane is an extracellular matrix of the inner ear that covers the neuroepithelium of the cochlea and contacts the stereocilia bundles of specialized sensory hair cells. Sound induces movement of these hair cells relative to the tectorial membrane, deflects the stereocilia and leads to fluctuations in hair-cell membrane potential, transducing sound into electrical signals. The chain is Beta-tectorin (TECTB) from Gallus gallus (Chicken).